A 332-amino-acid chain; its full sequence is Polygalacturonase inhibitor 1 (332 aa).

A signal peptide spans 1–24 (MASTASFMLAVLLAVAVAAAPARA). 2 disulfides stabilise this stretch: C27–C58 and C59–C66. 10 LRR repeats span residues 72-96 (VNNV…GLTA), 97-118 (LMSL…CLTA), 119-142 (LSNL…SLAR), 143-166 (IRSL…SFSD), 167-192 (LPNL…VQGQ), 193-215 (FRSL…AQDE), 216-236 (INTV…LFAA), 237-259 (GRPI…KLVF), 260-283 (PPEL…SLAA), and 284-310 (LSTL…VIRH). N-linked (GlcNAc...) asparagine glycosylation occurs at N131. 3 cysteine pairs are disulfide-bonded: C298–C312, C298–C320, and C320–C329.

This sequence belongs to the polygalacturonase-inhibiting protein family. Highly expressed in calli, immature and mature panicles, and in three inner floral organs: lodicules, stamens and carpels. Expressed at low level in seedling roots and mature stems.

It is found in the secreted. The protein resides in the cell wall. Functionally, inhibitor of fungal polygalacturonase. Regulates floral organ number. This Oryza sativa subsp. japonica (Rice) protein is Polygalacturonase inhibitor 1.